Here is a 195-residue protein sequence, read N- to C-terminus: MALTPTFSRAPDIAPAPKGIIDPATGRPIGANDPTFLSINDELADRGFLVTSADELINWARTGSLMWMTFGLACCAVEMMQMSMPRYDCERFGFAPRGSPRQSDVMIVAGTLTNKMAPALRKVYDQMPEPRYVISMGSCANGGGYYHYSYSVVRGCDRVVPVDIYVPGCPPSAEALLYGVLLLQRKIRRIGTIER.

4 residues coordinate [4Fe-4S] cluster: Cys74, Cys75, Cys139, and Cys169.

Belongs to the complex I 20 kDa subunit family. As to quaternary structure, NDH-1 is composed of 14 different subunits. Subunits NuoB, C, D, E, F, and G constitute the peripheral sector of the complex. It depends on [4Fe-4S] cluster as a cofactor.

The protein localises to the cell inner membrane. The catalysed reaction is a quinone + NADH + 5 H(+)(in) = a quinol + NAD(+) + 4 H(+)(out). NDH-1 shuttles electrons from NADH, via FMN and iron-sulfur (Fe-S) centers, to quinones in the respiratory chain. The immediate electron acceptor for the enzyme in this species is believed to be ubiquinone. Couples the redox reaction to proton translocation (for every two electrons transferred, four hydrogen ions are translocated across the cytoplasmic membrane), and thus conserves the redox energy in a proton gradient. This chain is NADH-quinone oxidoreductase subunit B, found in Methylorubrum extorquens (strain PA1) (Methylobacterium extorquens).